We begin with the raw amino-acid sequence, 879 residues long: Levansucrase (879 aa).

The first 37 residues, 1–37 (MTKEHKKMYKAGKYWAVATLVSASILMEVGVTTHADA), serve as a signal peptide directing secretion. Repeat copies occupy residues 66–81 (DNAT…SIAN), 82–97 (DNAT…SIAN), 98–113 (DNAT…SIAN), 114–129 (DNAT…SVAN), 130–145 (DNAT…SVAN), 146–161 (DNAT…SVAN), and 162–177 (DNAT…SVAN). The 7 X 16 AA tandem repeats of D-N-A-T-S-G-S-T-K-Q-E-S-S-[IV]-A-N stretch occupies residues 66–177 (DNATSGSTKQ…STKQESSVAN (112 aa)). 2 stretches are compositionally biased toward polar residues: residues 66–180 (DNAT…NDTK) and 189–213 (NTSN…AATQ). The interval 66-213 (DNATSGSTKQ…NNEQPSAATQ (148 aa)) is disordered. 3 residues coordinate sucrose: W311, D312, and S382. The active-site Nucleophile is D312. Ca(2+) is bound at residue D460. Sucrose is bound by residues R465 and D466. Residues Q491, L528, N530, and D562 each coordinate Ca(2+). E563 contacts sucrose. E565 (proton donor/acceptor) is an active-site residue. Residue R583 participates in sucrose binding. Residues 743–830 (SSGLGLKPHQ…TPAKPVQAGQ (88 aa)) are disordered. The segment covering 754-821 (VNPSQPTTPA…KPVNPSQPTT (68 aa)) has biased composition (polar residues). The short motif at 841-845 (LPQTG) is the LPXTG sorting signal element. Position 844 is a pentaglycyl murein peptidoglycan amidated threonine (T844). A propeptide spans 845-879 (GENNSQSQTMSFIGILLAMFGSLLGFLGIKKRRND) (removed by sortase).

The protein belongs to the glycosyl hydrolase 68 family.

It is found in the secreted. The protein localises to the cell wall. It catalyses the reaction [6)-beta-D-fructofuranosyl-(2-&gt;](n) alpha-D-glucopyranoside + sucrose = [6)-beta-D-fructofuranosyl-(2-&gt;](n+1) alpha-D-glucopyranoside + D-glucose. Ca(2+) may play an important structural role and promote stability of levansucrase. Fructosyltransferase that catalyzes the polymerization of the fructose moiety of sucrose to produce levan polymer and the fructo-oligosaccharide (FOS) 1-kestose. Also displays sucrose hydrolase activity. This is Levansucrase from Fructilactobacillus sanfranciscensis (Lactobacillus sanfranciscensis).